We begin with the raw amino-acid sequence, 160 residues long: Endoribonuclease YbeY (160 aa).

Zn(2+) contacts are provided by His118, His122, and His128.

This sequence belongs to the endoribonuclease YbeY family. Zn(2+) is required as a cofactor.

It is found in the cytoplasm. Its function is as follows. Single strand-specific metallo-endoribonuclease involved in late-stage 70S ribosome quality control and in maturation of the 3' terminus of the 16S rRNA. This Treponema pallidum (strain Nichols) protein is Endoribonuclease YbeY.